The primary structure comprises 328 residues: 17-beta-hydroxysteroid dehydrogenase type 1 (328 aa).

NADP(+)-binding positions include 10–38 and D66; that span reads GCSS…ATLR. S135 carries the phosphoserine; by PKA modification. S143 is a substrate binding site. Residue Y156 is the Proton acceptor of the active site. K160 serves as a coordination point for NADP(+). Residues 291-328 are disordered; the sequence is KAEAGAEAGGGAGPGAEDEAGRGAVGDPELGDPPAAPQ.

The protein belongs to the short-chain dehydrogenases/reductases (SDR) family. As to quaternary structure, homodimer. Exists predominantly as a homodimer but also exits as monomer.

Its subcellular location is the cytoplasm. The enzyme catalyses 17beta-estradiol + NAD(+) = estrone + NADH + H(+). The catalysed reaction is 17beta-estradiol + NADP(+) = estrone + NADPH + H(+). It carries out the reaction testosterone + NADP(+) = androst-4-ene-3,17-dione + NADPH + H(+). The protein operates within steroid biosynthesis; estrogen biosynthesis. Its function is as follows. Favors the reduction of estrogens and androgens. Converts estrone (E1) to a more potent estrogen, 17beta-estradiol (E2). Also has 20-alpha-HSD activity. Uses preferentially NADH. The polypeptide is 17-beta-hydroxysteroid dehydrogenase type 1 (Homo sapiens (Human)).